The sequence spans 477 residues: Ribulose bisphosphate carboxylase large chain (477 aa).

The propeptide occupies 1-2 (MS). An N-acetylproline modification is found at P3. N6,N6,N6-trimethyllysine is present on K14. Positions 123 and 173 each coordinate substrate. The Proton acceptor role is filled by K175. K177 is a substrate binding site. Mg(2+) is bound by residues K201, D203, and E204. Residue K201 is modified to N6-carboxylysine. The active-site Proton acceptor is H294. Substrate is bound by residues R295, H327, and S379.

This sequence belongs to the RuBisCO large chain family. Type I subfamily. In terms of assembly, heterohexadecamer of 8 large chains and 8 small chains; disulfide-linked. The disulfide link is formed within the large subunit homodimers. Mg(2+) serves as cofactor. In terms of processing, the disulfide bond which can form in the large chain dimeric partners within the hexadecamer appears to be associated with oxidative stress and protein turnover.

It is found in the plastid. The protein resides in the chloroplast. It carries out the reaction 2 (2R)-3-phosphoglycerate + 2 H(+) = D-ribulose 1,5-bisphosphate + CO2 + H2O. It catalyses the reaction D-ribulose 1,5-bisphosphate + O2 = 2-phosphoglycolate + (2R)-3-phosphoglycerate + 2 H(+). In terms of biological role, ruBisCO catalyzes two reactions: the carboxylation of D-ribulose 1,5-bisphosphate, the primary event in carbon dioxide fixation, as well as the oxidative fragmentation of the pentose substrate in the photorespiration process. Both reactions occur simultaneously and in competition at the same active site. The protein is Ribulose bisphosphate carboxylase large chain of Dioscorea elephantipes (Elephant's foot yam).